The chain runs to 190 residues: Xanthine phosphoribosyltransferase (190 aa).

L20 and N27 together coordinate xanthine. Residue 128–132 coordinates 5-phospho-alpha-D-ribose 1-diphosphate; the sequence is ANGKA. Position 156 (K156) interacts with xanthine.

This sequence belongs to the purine/pyrimidine phosphoribosyltransferase family. Xpt subfamily. Homodimer.

The protein localises to the cytoplasm. The enzyme catalyses XMP + diphosphate = xanthine + 5-phospho-alpha-D-ribose 1-diphosphate. Its pathway is purine metabolism; XMP biosynthesis via salvage pathway; XMP from xanthine: step 1/1. Converts the preformed base xanthine, a product of nucleic acid breakdown, to xanthosine 5'-monophosphate (XMP), so it can be reused for RNA or DNA synthesis. The protein is Xanthine phosphoribosyltransferase of Pseudomonas fluorescens (strain ATCC BAA-477 / NRRL B-23932 / Pf-5).